Consider the following 338-residue polypeptide: Serpentine receptor class alpha-31 (338 aa).

Transmembrane regions (helical) follow at residues 23–43, 59–79, 108–125, 142–162, 188–208, 240–260, and 276–296; these read GNHC…VFAI, LLFS…GIRI, LYYY…SLFF, FSKI…YWIF, VNEF…VIFF, VCII…TTEI, and SIAF…IIIY.

The protein belongs to the nematode receptor-like protein sra family.

It localises to the membrane. The chain is Serpentine receptor class alpha-31 (sra-31) from Caenorhabditis elegans.